The primary structure comprises 200 residues: ADP-ribose 1''-phosphate phosphatase (200 aa).

Residues 1 to 200 (MDPPSVRSKI…EVTVVRPHGG (200 aa)) enclose the Macro domain. Residues 15 to 17 (GDL), 29 to 31 (ACN), 36 to 41 (WGKGIA), and 169 to 175 (FNAGLFG) each bind substrate.

The protein belongs to the POA1 family.

The enzyme catalyses ADP-alpha-D-ribose 1''-phosphate + H2O = ADP-D-ribose + phosphate. Its function is as follows. Highly specific phosphatase involved in the metabolism of ADP-ribose 1''-phosphate (Appr1p) which is produced as a consequence of tRNA splicing. The protein is ADP-ribose 1''-phosphate phosphatase (poa1) of Aspergillus fumigatus (strain ATCC MYA-4609 / CBS 101355 / FGSC A1100 / Af293) (Neosartorya fumigata).